Reading from the N-terminus, the 222-residue chain is 7-cyano-7-deazaguanine synthase (222 aa).

8–18 (LSGGMDSTTLA) is a binding site for ATP. Cys-188, Cys-196, Cys-199, and Cys-202 together coordinate Zn(2+).

This sequence belongs to the QueC family. It depends on Zn(2+) as a cofactor.

The enzyme catalyses 7-carboxy-7-deazaguanine + NH4(+) + ATP = 7-cyano-7-deazaguanine + ADP + phosphate + H2O + H(+). It participates in purine metabolism; 7-cyano-7-deazaguanine biosynthesis. Catalyzes the ATP-dependent conversion of 7-carboxy-7-deazaguanine (CDG) to 7-cyano-7-deazaguanine (preQ(0)). The polypeptide is 7-cyano-7-deazaguanine synthase (Methanoculleus marisnigri (strain ATCC 35101 / DSM 1498 / JR1)).